The sequence spans 959 residues: DEAD-box ATP-dependent RNA helicase rde-12 (959 aa).

The tract at residues 1–336 (MSSFGNNAGG…EGVNAPVRAP (336 aa)) is disordered. Residues 71-97 (GRREDDRSHSRDNHGGSRYGERDDRGN) are compositionally biased toward basic and acidic residues. The segment covering 98–118 (NGRSADNRYSQSNYNYDSNRG) has biased composition (polar residues). Basic and acidic residues predominate over residues 122–134 (YQRDNHGSKDDRG). Residues 137 to 160 (NQYNDHGSNHNSNSRNDQYRQGSY) are compositionally biased toward polar residues. 2 stretches are compositionally biased toward basic and acidic residues: residues 166–181 (SGYR…DNDQ) and 189–201 (RDSD…DHHN). A compositionally biased stretch (polar residues) spans 202–213 (YNSQSSPRSHQG). Basic and acidic residues-rich tracts occupy residues 219 to 239 (SAPK…HDSY) and 255 to 270 (YRND…DHRS). Residues 271–280 (GGNNSSSGFK) are compositionally biased toward low complexity. The span at 281 to 301 (NDGGFGGNDNRGFGNNGGGSF) shows a compositional bias: gly residues. The span at 302–317 (GNPNNSYRGNSNNIGG) shows a compositional bias: low complexity. The short motif at 380-408 (TSWTNSGLHPTILETLKRIKYNNVRTIQG) is the Q motif element. A Helicase ATP-binding domain is found at 411 to 599 (IPQVLDGHDV…NELMKRLPGQ (189 aa)). Residue 424–431 (AETSAGKT) participates in ATP binding. The DEAD box signature appears at 539-542 (DEAD). The Helicase C-terminal domain maps to 632–792 (KLREILKQNV…KVPDFLDAMA (161 aa)). Disordered regions lie at residues 793-834 (KSSR…GGGR) and 858-959 (GGGG…DDEW). Gly residues-rich tracts occupy residues 800–834 (GTSG…GGGR) and 858–872 (GGGG…GFGG). A compositionally biased stretch (polar residues) spans 930-941 (TLGSSTFGTANN). Acidic residues predominate over residues 942 to 959 (ADEEPTETGADGNDDDEW).

It belongs to the DEAD box helicase family. DDX3/DED1 subfamily. As to quaternary structure, interacts with wago-1, ergo-1 and rde-1. Requires Mg(2+) as cofactor. As to expression, expressed in the soma and germline.

It is found in the cytoplasm. The protein localises to the perinuclear region. The protein resides in the cytoplasmic granule. It localises to the P-body. The catalysed reaction is ATP + H2O = ADP + phosphate + H(+). Functionally, probable ATP-dependent RNA helicase involved in RNAi-mediated gene silencing. Specifically required in the endogenous siRNA pathway for biogenesis of secondary endogenous small interfering RNA (siRNA) intermediates called 22G-RNAs. May associate with and recruit rde-10 to primary siRNA-targeted mRNA for secondary siRNA synthesis. May be recruited to target mRNAs by rde-1 and/or ergo-1. The polypeptide is DEAD-box ATP-dependent RNA helicase rde-12 (Caenorhabditis elegans).